Consider the following 99-residue polypeptide: Co-chaperonin GroES (99 aa).

Belongs to the GroES chaperonin family. Heptamer of 7 subunits arranged in a ring. Interacts with the chaperonin GroEL.

The protein localises to the cytoplasm. Its function is as follows. Together with the chaperonin GroEL, plays an essential role in assisting protein folding. The GroEL-GroES system forms a nano-cage that allows encapsulation of the non-native substrate proteins and provides a physical environment optimized to promote and accelerate protein folding. GroES binds to the apical surface of the GroEL ring, thereby capping the opening of the GroEL channel. This is Co-chaperonin GroES from Rhodococcus erythropolis (strain PR4 / NBRC 100887).